Reading from the N-terminus, the 163-residue chain is NADH-quinone oxidoreductase subunit I (163 aa).

2 4Fe-4S ferredoxin-type domains span residues 53–83 (LRRY…IEAG) and 94–123 (VRYD…EGPN). Cys63, Cys66, Cys69, Cys73, Cys103, Cys106, Cys109, and Cys113 together coordinate [4Fe-4S] cluster.

It belongs to the complex I 23 kDa subunit family. In terms of assembly, NDH-1 is composed of 14 different subunits. Subunits NuoA, H, J, K, L, M, N constitute the membrane sector of the complex. Requires [4Fe-4S] cluster as cofactor.

The protein resides in the cell inner membrane. It catalyses the reaction a quinone + NADH + 5 H(+)(in) = a quinol + NAD(+) + 4 H(+)(out). In terms of biological role, NDH-1 shuttles electrons from NADH, via FMN and iron-sulfur (Fe-S) centers, to quinones in the respiratory chain. The immediate electron acceptor for the enzyme in this species is believed to be ubiquinone. Couples the redox reaction to proton translocation (for every two electrons transferred, four hydrogen ions are translocated across the cytoplasmic membrane), and thus conserves the redox energy in a proton gradient. This Brucella suis (strain ATCC 23445 / NCTC 10510) protein is NADH-quinone oxidoreductase subunit I.